Here is a 353-residue protein sequence, read N- to C-terminus: Terpene synthase 3 (353 aa).

Mg(2+) contacts are provided by D118, N261, and E269. The D(D/E)XX(D/E) motif motif lies at D118 to E122. The NSE motif motif lies at N261–E269. Residues W342 to Y349 carry the WxxxxxRY motif motif.

This sequence belongs to the terpene synthase family. The cofactor is Mg(2+).

Terpene synthase that may be involved in the production of volatile terpenoids. Does not show detectable terpene products with either farnesyl diphosphate (FPP) or geranyl diphosphate (GPP). P.polycephalum has a unique biology and these volatile terpenoids could function in internal communication of P.polycephalum, to mark the territory that have been explored, or they may be involved in chemotaxis. The polypeptide is Terpene synthase 3 (Physarum polycephalum (Slime mold)).